The primary structure comprises 252 residues: 3-deoxy-manno-octulosonate cytidylyltransferase (252 aa).

Belongs to the KdsB family.

It localises to the cytoplasm. It carries out the reaction 3-deoxy-alpha-D-manno-oct-2-ulosonate + CTP = CMP-3-deoxy-beta-D-manno-octulosonate + diphosphate. It functions in the pathway nucleotide-sugar biosynthesis; CMP-3-deoxy-D-manno-octulosonate biosynthesis; CMP-3-deoxy-D-manno-octulosonate from 3-deoxy-D-manno-octulosonate and CTP: step 1/1. Its pathway is bacterial outer membrane biogenesis; lipopolysaccharide biosynthesis. Activates KDO (a required 8-carbon sugar) for incorporation into bacterial lipopolysaccharide in Gram-negative bacteria. This chain is 3-deoxy-manno-octulosonate cytidylyltransferase, found in Thiobacillus denitrificans (strain ATCC 25259 / T1).